We begin with the raw amino-acid sequence, 334 residues long: Holliday junction branch migration complex subunit RuvB (334 aa).

Residues 4-184 (ADRIISPNAT…FGIVQRLEFY (181 aa)) form a large ATPase domain (RuvB-L) region. ATP-binding positions include isoleucine 23, arginine 24, glycine 65, lysine 68, threonine 69, threonine 70, 131-133 (EDY), arginine 174, tyrosine 184, and arginine 221. Residue threonine 69 participates in Mg(2+) binding. The interval 185–255 (SVEDLRHIVA…VADKALNMLN (71 aa)) is small ATPAse domain (RuvB-S). The segment at 258 to 334 (LHGFDHMDRR…YNHFGLTMPE (77 aa)) is head domain (RuvB-H). Arginine 313 and arginine 318 together coordinate DNA.

This sequence belongs to the RuvB family. In terms of assembly, homohexamer. Forms an RuvA(8)-RuvB(12)-Holliday junction (HJ) complex. HJ DNA is sandwiched between 2 RuvA tetramers; dsDNA enters through RuvA and exits via RuvB. An RuvB hexamer assembles on each DNA strand where it exits the tetramer. Each RuvB hexamer is contacted by two RuvA subunits (via domain III) on 2 adjacent RuvB subunits; this complex drives branch migration. In the full resolvosome a probable DNA-RuvA(4)-RuvB(12)-RuvC(2) complex forms which resolves the HJ.

Its subcellular location is the cytoplasm. The enzyme catalyses ATP + H2O = ADP + phosphate + H(+). Functionally, the RuvA-RuvB-RuvC complex processes Holliday junction (HJ) DNA during genetic recombination and DNA repair, while the RuvA-RuvB complex plays an important role in the rescue of blocked DNA replication forks via replication fork reversal (RFR). RuvA specifically binds to HJ cruciform DNA, conferring on it an open structure. The RuvB hexamer acts as an ATP-dependent pump, pulling dsDNA into and through the RuvAB complex. RuvB forms 2 homohexamers on either side of HJ DNA bound by 1 or 2 RuvA tetramers; 4 subunits per hexamer contact DNA at a time. Coordinated motions by a converter formed by DNA-disengaged RuvB subunits stimulates ATP hydrolysis and nucleotide exchange. Immobilization of the converter enables RuvB to convert the ATP-contained energy into a lever motion, pulling 2 nucleotides of DNA out of the RuvA tetramer per ATP hydrolyzed, thus driving DNA branch migration. The RuvB motors rotate together with the DNA substrate, which together with the progressing nucleotide cycle form the mechanistic basis for DNA recombination by continuous HJ branch migration. Branch migration allows RuvC to scan DNA until it finds its consensus sequence, where it cleaves and resolves cruciform DNA. In Hahella chejuensis (strain KCTC 2396), this protein is Holliday junction branch migration complex subunit RuvB.